We begin with the raw amino-acid sequence, 712 residues long: Transcriptional regulator GZF3 (712 aa).

Polar residues predominate over residues 1 to 13 (MSMSDIQQRPQIP). 5 disordered regions span residues 1-20 (MSMSDIQQRPQIPTTTTAAV), 27-135 (NVNT…GPVC), 173-280 (SLKT…HHHL), 377-533 (DVSS…GNNF), and 596-712 (LNNN…KVKI). Low complexity-rich tracts occupy residues 27-84 (NVNT…EQSS) and 107-131 (PKTGTTSSSSSTTTSSATSSKISMS). The GATA-type zinc-finger motif lies at 135 to 159 (CGNCQTQTTPLWRRDETGQVLCNAC). A compositionally biased stretch (low complexity) spans 186-199 (KQNGSNSQSSKSSG). Positions 213–223 (GKKSPKSKKKS) are enriched in basic residues. The segment covering 246–261 (ATSNNTPTFKSTTSQS) has biased composition (polar residues). Residues 268-280 (NHHHQHHNHHHHL) are compositionally biased toward basic residues. Low complexity predominate over residues 379–414 (SSINGSSTSLSSSSASSSIFSSVAPSTSSSSSLSNG). 2 stretches are compositionally biased toward polar residues: residues 429 to 447 (SKISSPSSQPFTRSTTPLQ) and 484 to 498 (QQSMANYSQTNRSPI). Composition is skewed to low complexity over residues 499–532 (NGNQDNNNNNNNNNNNNNNGNNNGNNNSNNNGNN) and 596–616 (LNNNGGMSSQTQPQPSQQPQQ). Positions 545–598 (TRISELELVNDLYRTRIMELEAMEQAARLRENSMKKRLDEVMNLQINYQNLLNN) form a coiled coil. The segment covering 631–667 (DQGSQSISPNVSITGSTTITSPNSRSKIISETTPTHH) has biased composition (polar residues).

Its subcellular location is the nucleus. Probable transcription factor involved in response to fluconazole, LiCl, and copper. The protein is Transcriptional regulator GZF3 (GZF3) of Candida albicans (strain SC5314 / ATCC MYA-2876) (Yeast).